Consider the following 359-residue polypeptide: Histamine H2 receptor (359 aa).

Topologically, residues 1–22 (MISNGTGSSFCLDSPPCRITVS) are extracellular. N-linked (GlcNAc...) asparagine glycosylation occurs at asparagine 4. Residues 23–44 (VVLTVLILITIAGNVVVCLAVG) traverse the membrane as a helical segment. At 45–57 (LNRRLRSLTNCFI) the chain is on the cytoplasmic side. The chain crosses the membrane as a helical span at residues 58-81 (VSLAITDLLLGLLVLPFSAFYQLS). Residues 82 to 92 (CRWSFGKVFCN) are Extracellular-facing. A disulfide bridge links cysteine 91 with cysteine 174. The chain crosses the membrane as a helical span at residues 93–114 (IYTSLDVMLCTASILNLFMISL). The Cytoplasmic segment spans residues 115–134 (DRYCAVTDPLRYPVLITPVR). The helical transmembrane segment at 135-159 (VAVSLVLIWVISITLSFLSIHLGWN) threads the bilayer. Residues 160-180 (SRNETSSFNHTIPKCKVQVNL) lie on the Extracellular side of the membrane. Residues 181–204 (VYGLVDGLVTFYLPLLVMCITYYR) form a helical membrane-spanning segment. The Cytoplasmic segment spans residues 205–234 (IFKIARDQAKRIHHMGSWKAATIGEHKATV). Residues 235–258 (TLAAVMGAFIICWFPYFTVFVYRG) traverse the membrane as a helical segment. Topologically, residues 259-267 (LKGDDAINE) are extracellular. A helical membrane pass occupies residues 268–289 (AFEAVVLWLGYANSALNPILYA). Residues 290–359 (TLNRDFRTAY…VTAPRGATDR (70 aa)) lie on the Cytoplasmic side of the membrane. Cysteine 305 carries S-palmitoyl cysteine lipidation. The segment covering 310–327 (HNAQETSLRSNSSQLARN) has biased composition (polar residues). The tract at residues 310–359 (HNAQETSLRSNSSQLARNQSREPMRQEEKPLKLQVWSGTEVTAPRGATDR) is disordered. The segment covering 328 to 340 (QSREPMRQEEKPL) has biased composition (basic and acidic residues).

It belongs to the G-protein coupled receptor 1 family. Gastric fundus and, to a lesser extent, in brain.

It localises to the cell membrane. The H2 subclass of histamine receptors mediates gastric acid secretion. The activity of this receptor is mediated by G proteins which activate adenylyl cyclase. This is Histamine H2 receptor (HRH2) from Canis lupus familiaris (Dog).